The primary structure comprises 298 residues: GTPase Era (298 aa).

Positions 8 to 176 (RCGRIAVIGR…VSDLLALLPE (169 aa)) constitute an Era-type G domain. Positions 16–23 (GRPNVGKS) are G1. Residue 16 to 23 (GRPNVGKS) participates in GTP binding. Positions 42–46 (QTTRH) are G2. A G3 region spans residues 63–66 (DTPG). GTP-binding positions include 63–67 (DTPGL) and 125–128 (NKID). Residues 125–128 (NKID) are G4. The segment at 155-157 (VSA) is G5. Positions 199–283 (VREQVMRQLG…FLETWVRVRK (85 aa)) constitute a KH type-2 domain.

The protein belongs to the TRAFAC class TrmE-Era-EngA-EngB-Septin-like GTPase superfamily. Era GTPase family. Monomer.

It localises to the cytoplasm. Its subcellular location is the cell inner membrane. In terms of biological role, an essential GTPase that binds both GDP and GTP, with rapid nucleotide exchange. Plays a role in 16S rRNA processing and 30S ribosomal subunit biogenesis and possibly also in cell cycle regulation and energy metabolism. The protein is GTPase Era of Xylella fastidiosa (strain Temecula1 / ATCC 700964).